The chain runs to 308 residues: Homoserine O-succinyltransferase (308 aa).

Residue Cys-142 is the Acyl-thioester intermediate of the active site. Substrate-binding residues include Lys-163 and Ser-192. His-235 serves as the catalytic Proton acceptor. Glu-237 is an active-site residue. Arg-249 is a binding site for substrate.

This sequence belongs to the MetA family.

It localises to the cytoplasm. The catalysed reaction is L-homoserine + succinyl-CoA = O-succinyl-L-homoserine + CoA. The protein operates within amino-acid biosynthesis; L-methionine biosynthesis via de novo pathway; O-succinyl-L-homoserine from L-homoserine: step 1/1. Functionally, transfers a succinyl group from succinyl-CoA to L-homoserine, forming succinyl-L-homoserine. The sequence is that of Homoserine O-succinyltransferase from Pseudoalteromonas atlantica (strain T6c / ATCC BAA-1087).